A 179-amino-acid polypeptide reads, in one-letter code: MAKLHDYYKDEVVKQLMSQFDYNSVMQVPRVEKITLNMGVGEAIADKKLLDNAAADLAAISGQKPFITKARKSVAGFKIRQGYPIGCKVTLRGERMWEFFERLISIAVPRIRDFRGLSAKSFDGRGNYSMGVREQIIFPEIDYDKVDRVRGLDITITTTAKSDDEGRALLAAFNFPFRK.

This sequence belongs to the universal ribosomal protein uL5 family. Part of the 50S ribosomal subunit; part of the 5S rRNA/L5/L18/L25 subcomplex. Contacts the 5S rRNA and the P site tRNA. Forms a bridge to the 30S subunit in the 70S ribosome.

Its function is as follows. This is one of the proteins that bind and probably mediate the attachment of the 5S RNA into the large ribosomal subunit, where it forms part of the central protuberance. In the 70S ribosome it contacts protein S13 of the 30S subunit (bridge B1b), connecting the 2 subunits; this bridge is implicated in subunit movement. Contacts the P site tRNA; the 5S rRNA and some of its associated proteins might help stabilize positioning of ribosome-bound tRNAs. The polypeptide is Large ribosomal subunit protein uL5 (Serratia proteamaculans (strain 568)).